The following is a 495-amino-acid chain: MFPPSSDLTELNDGQPLSGHHADKPEEACGVFGIYAPEEAVAKLTYFGLYALQHRGQESAGIATFAGTTVHCHKDMGLVSQVFQESKLNEMVGTLAVGHTRYSTTGSSHRVNAQPAVLPTRLGPLALAHNGNLVNTNQLREALAERGCEDFVTTTDSEMIAVAIANEVDKGKDWVEGTIAALTLCAGAYSLVIGTPEGIIGVRDPHGIRPLVIGVLEEETPRYVLASETCALDIIGATYVRTVEAGELVHITESGLVSHRLAESADRKLCVFEMIYFSRPDSVVNDESLYTYRMRIGKHLAKESPVDADLVMGVPDSGIPAAIGFSQASGIPYAEGLIKNRYVGRTFIQPTQHMREHGIRMKLNPLKDVLAGKRIIIVDDSIVRGTTSRKIVRALREAGATEVHMRISSPPVTHPCFYGIDTDSQDQLIAARLTVAEIAEQIEVDSLAYLSQEGMLLCTGEDISHFCSACFNGRYPITVPDAVRRSKLMLENITA.

Positions 1-22 (MFPPSSDLTELNDGQPLSGHHA) are disordered. Residues 1-28 (MFPPSSDLTELNDGQPLSGHHADKPEEA) constitute a propeptide that is removed on maturation. Residue C29 is the Nucleophile of the active site. The Glutamine amidotransferase type-2 domain occupies 29 to 254 (CGVFGIYAPE…AGELVHITES (226 aa)). Residue C270 participates in [4Fe-4S] cluster binding. Residues S317, D379, and D380 each coordinate Mg(2+). [4Fe-4S] cluster is bound by residues C416, C467, and C470.

In the C-terminal section; belongs to the purine/pyrimidine phosphoribosyltransferase family. Mg(2+) serves as cofactor. The cofactor is [4Fe-4S] cluster.

The enzyme catalyses 5-phospho-beta-D-ribosylamine + L-glutamate + diphosphate = 5-phospho-alpha-D-ribose 1-diphosphate + L-glutamine + H2O. It functions in the pathway purine metabolism; IMP biosynthesis via de novo pathway; N(1)-(5-phospho-D-ribosyl)glycinamide from 5-phospho-alpha-D-ribose 1-diphosphate: step 1/2. Functionally, catalyzes the formation of phosphoribosylamine from phosphoribosylpyrophosphate (PRPP) and glutamine. In Synechocystis sp. (strain ATCC 27184 / PCC 6803 / Kazusa), this protein is Amidophosphoribosyltransferase.